A 412-amino-acid chain; its full sequence is Docking protein 2 (412 aa).

The PH domain occupies 4-114 (GAVKQGFLYL…WVQAICLLAF (111 aa)). The region spanning 147-252 (PHKEFAVTMR…SAQKNAAPAT (106 aa)) is the IRS-type PTB domain. The interval 246 to 296 (KNAAPATPQPQPATIPASLPRPDSPYSRPHDSLPPPSPTTPVPAPRPRGQE) is disordered. Tyrosine 271 bears the Phosphotyrosine mark. Positions 277–291 (SLPPPSPTTPVPAPR) are enriched in pro residues. Phosphotyrosine is present on residues tyrosine 299 and tyrosine 345. The interval 359–412 (SPQEPRGEAWRRQATADRDPAGLQHVQPAGQDFSASGWQPGTEYDNVVLKKGPK) is disordered. The span at 361–378 (QEPRGEAWRRQATADRDP) shows a compositional bias: basic and acidic residues.

It belongs to the DOK family. Type A subfamily. In terms of assembly, interacts with phosphorylated RASGAP and EGFR. Interacts with RET and NCK. Interacts (via PH domain) with TEK/TIE2 (tyrosine phosphorylated). As to quaternary structure, (Microbial infection) Interacts with Herpes simplex virus 1 (HHV-1) protein UL46; this interaction induces DOK2 phosphorylation and subsequent degradation. Post-translationally, on immunoreceptor stimulation, phosphorylated on C-terminal tyrosine residues. Phosphorylation on Tyr-345 is required for binding to the SH2 domain of NCK. Phosphorylation on both Tyr-271 and Tyr-299 is required for interaction with RASGAP. Phosphorylated on tyrosine residues by TEK/TIE2. In terms of tissue distribution, highly expressed in peripheral blood leukocytes, lymph nodes and spleen. Lower expression in thymus, bone marrow and fetal liver.

DOK proteins are enzymatically inert adaptor or scaffolding proteins. They provide a docking platform for the assembly of multimolecular signaling complexes. DOK2 may modulate the cellular proliferation induced by IL-4, as well as IL-2 and IL-3. May be involved in modulating Bcr-Abl signaling. Attenuates EGF-stimulated MAP kinase activation. In Homo sapiens (Human), this protein is Docking protein 2 (DOK2).